Reading from the N-terminus, the 476-residue chain is UDP-N-acetylmuramate--L-alanine ligase (476 aa).

126-132 (GAHGKTT) is an ATP binding site.

The protein belongs to the MurCDEF family.

It is found in the cytoplasm. It catalyses the reaction UDP-N-acetyl-alpha-D-muramate + L-alanine + ATP = UDP-N-acetyl-alpha-D-muramoyl-L-alanine + ADP + phosphate + H(+). It functions in the pathway cell wall biogenesis; peptidoglycan biosynthesis. Cell wall formation. The chain is UDP-N-acetylmuramate--L-alanine ligase from Psychrobacter sp. (strain PRwf-1).